We begin with the raw amino-acid sequence, 343 residues long: NADH-ubiquinone oxidoreductase chain 2 (343 aa).

The next 8 membrane-spanning stretches (helical) occupy residues 1-21, 59-81, 96-116, 150-170, 178-198, 200-220, 241-261, and 270-290; these read MNPM…TMIT, YYLI…ALNT, TIIT…SWLP, NITL…LGSL, LMAF…TMAP, ISTL…LLIN, MTIL…SGFM, and LISM…LLSL.

It belongs to the complex I subunit 2 family.

The protein resides in the mitochondrion inner membrane. It catalyses the reaction a ubiquinone + NADH + 5 H(+)(in) = a ubiquinol + NAD(+) + 4 H(+)(out). In terms of biological role, core subunit of the mitochondrial membrane respiratory chain NADH dehydrogenase (Complex I) that is believed to belong to the minimal assembly required for catalysis. Complex I functions in the transfer of electrons from NADH to the respiratory chain. The immediate electron acceptor for the enzyme is believed to be ubiquinone. This is NADH-ubiquinone oxidoreductase chain 2 (MT-ND2) from Lycodon semicarinatus (Ryukyu odd-tooth snake).